We begin with the raw amino-acid sequence, 129 residues long: D-ribose pyranase (129 aa).

His20 serves as the catalytic Proton donor. Substrate-binding positions include Asp28, His96, and 118 to 120; that span reads YAN.

The protein belongs to the RbsD / FucU family. RbsD subfamily. In terms of assembly, homodecamer.

The protein localises to the cytoplasm. It carries out the reaction beta-D-ribopyranose = beta-D-ribofuranose. It participates in carbohydrate metabolism; D-ribose degradation; D-ribose 5-phosphate from beta-D-ribopyranose: step 1/2. In terms of biological role, catalyzes the interconversion of beta-pyran and beta-furan forms of D-ribose. The chain is D-ribose pyranase from Staphylococcus haemolyticus (strain JCSC1435).